The chain runs to 235 residues: SMN complex subunit yip11/gem2 (235 aa).

Residues 1-34 form a disordered region; that stretch reads MPSKRKRNPLQYQTSGSLDEETNQRSAFPQIDNN. Residues 24 to 34 show a composition bias toward polar residues; that stretch reads QRSAFPQIDNN. Ser117 and Ser118 each carry phosphoserine.

It belongs to the gemin-2 family. In terms of assembly, part of the core SMN complex at least composed of smn1, yip11/gem2, gem6, gem7 and gem8. Interacts with smn1; the interaction is direct.

It is found in the nucleus. Its function is as follows. The SMN complex catalyzes the assembly of small nuclear ribonucleoproteins (snRNPs), the building blocks of the spliceosome, and thereby plays an important role in the splicing of cellular pre-mRNAs. Most spliceosomal snRNPs contain a common set of Sm proteins smb1, smd1, smd2, smd3, sme1, smf1 and smg1 that assemble in a heptameric protein ring on the Sm site of the small nuclear RNA to form the core snRNP. In the cytosol, the Sm proteins smd1, smd2, sme1, smf1 and smg1 (5Sm) are trapped in an inactive 6S pICln-Sm complex by the chaperone saf5. To complete assembly of core snRNPs, the SMN complex accepts 5Sm from saf5. Binding of snRNA inside 5Sm ultimately triggers eviction of the SMN complex, thereby allowing binding of smd3 and smb1 to complete assembly of the core snRNP. Within the SMN complex, yip11/gem2 constrains the conformation of 5Sm, thereby promoting 5Sm binding to snRNA containing the snRNP code (a nonameric Sm site and a 3'-adjacent stem-loop), thus preventing progression of assembly until a cognate substrate is bound. The protein is SMN complex subunit yip11/gem2 (yip11) of Schizosaccharomyces pombe (strain 972 / ATCC 24843) (Fission yeast).